The primary structure comprises 200 residues: Troponin I-like protein (200 aa).

Disordered regions lie at residues 1–20 and 181–200; these read MGDEEKRKMEEKERKKAEVR and ENKADKKPEWALGSKKENEE. Residues 2–116 are a coiled coil; the sequence is GDEEKRKMEE…EDAKYDLEYE (115 aa).

It belongs to the troponin I family. In terms of tissue distribution, expressed in salivary gland, gut, muscle and cuticle (at protein level).

Functionally, inhibits endothelial cell proliferation and angiogenesis in a vertebrate host. Probably required for efficient blood feeding on vertebrate hosts. The chain is Troponin I-like protein from Haemaphysalis longicornis (Bush tick).